A 551-amino-acid chain; its full sequence is Endolytic murein transglycosylase (551 aa).

The Cytoplasmic portion of the chain corresponds to 1 to 187 (MSEKSREEEK…PKKEKKSHVK (187 aa)). Residues 38-180 (VRTPANEPSA…EGAKPAKPKK (143 aa)) are disordered. Composition is skewed to low complexity over residues 100-110 (PSSPAEESGSR) and 145-157 (QAGP…ATET). Residues 159-174 (DIIRDTSRRSRREGAK) are compositionally biased toward basic and acidic residues. Residues 188–208 (AFVISFLVFLALLSAGGYFGY) traverse the membrane as a helical segment. Topologically, residues 209-551 (QYVLDSLLPI…VAEHVNSKLN (343 aa)) are extracellular.

This sequence belongs to the transglycosylase MltG family.

Its subcellular location is the cell membrane. It catalyses the reaction a peptidoglycan chain = a peptidoglycan chain with N-acetyl-1,6-anhydromuramyl-[peptide] at the reducing end + a peptidoglycan chain with N-acetylglucosamine at the non-reducing end.. Its function is as follows. Functions as a peptidoglycan terminase that cleaves nascent peptidoglycan strands endolytically to terminate their elongation. Involved in peripheral peptidoglycan (PG) synthesis. The protein is Endolytic murein transglycosylase of Streptococcus pneumoniae serotype 2 (strain D39 / NCTC 7466).